Reading from the N-terminus, the 267-residue chain is tRNA pseudouridine synthase A (267 aa).

The active-site Nucleophile is the aspartate 55. Tyrosine 109 serves as a coordination point for substrate.

It belongs to the tRNA pseudouridine synthase TruA family.

The catalysed reaction is uridine(38/39/40) in tRNA = pseudouridine(38/39/40) in tRNA. Formation of pseudouridine at positions 38, 39 and 40 in the anticodon stem and loop of transfer RNAs. In Natronomonas pharaonis (strain ATCC 35678 / DSM 2160 / CIP 103997 / JCM 8858 / NBRC 14720 / NCIMB 2260 / Gabara) (Halobacterium pharaonis), this protein is tRNA pseudouridine synthase A.